The primary structure comprises 808 residues: Ribosome biogenesis protein BOP1 homolog (808 aa).

Low complexity-rich tracts occupy residues 1–25 and 33–50; these read MTSP…LTPC and ATSS…SSFD. Residues 1 to 55 are disordered; sequence MTSPKGKPSPKRSAPAPATAALTPCAEERTEGATSSASASASSHISSSFDSPRDD. 5 WD repeats span residues 430 to 469, 640 to 680, 682 to 720, 724 to 766, and 777 to 808; these read GHTA…LMKR, KFSE…RRFK, SGGV…KPYK, SHKG…DYNK, and KHQR…AWTE.

Belongs to the WD repeat BOP1/ERB1 family.

It localises to the nucleus. The protein localises to the nucleolus. Its subcellular location is the nucleoplasm. Functionally, required for maturation of ribosomal RNAs and formation of the large ribosomal subunit. The protein is Ribosome biogenesis protein BOP1 homolog of Leishmania major.